Reading from the N-terminus, the 1378-residue chain is Protein CLASP-1 (1378 aa).

Residues 168–206 (LIPQLCRLTNDPNSEVRDVSTQCLIDLMVYGGKPIVAKI) form an HEAT 1 repeat. Disordered regions lie at residues 231–254 (RGDL…RNSL), 266–325 (IHPS…TRSS), and 590–725 (MLRD…HQTP). Low complexity-rich tracts occupy residues 269-283 (SAST…RLST) and 610-619 (NQKQQPNQQN). Polar residues-rich tracts occupy residues 620–630 (ISQKFLSQRSA) and 637–648 (IQLSVKPQTTAI). Residues 664-676 (SSTSTSFSAVRSS) show a composition bias toward low complexity. Over residues 677–690 (GYGQNQSTTPNRAK) the composition is skewed to polar residues. Low complexity predominate over residues 704–721 (TNGNNNNKSSSSSPSTST). Positions 740-767 (ASLTQEQANCLQNAMNTAKDEMSKNNED) form a coiled coil. Residues 775-784 (IRKTPPKEVP) are compositionally biased toward basic and acidic residues. Residues 775–823 (IRKTPPKEVPRSYNNSPFKPSNLDSSVHRSYNNNSPFRPSSGSVGSGSN) are disordered. A compositionally biased stretch (polar residues) spans 786-812 (SYNNSPFKPSNLDSSVHRSYNNNSPFR). One copy of the HEAT 2 repeat lies at 1305-1341 (HLIVNDVAPCFVTAYESMSSTVRKCAVFGLVALVQRV).

The protein belongs to the CLASP family.

The protein localises to the cytoplasm. Its subcellular location is the cytoskeleton. In terms of biological role, microtubule plus-end tracking protein that promotes the stabilization of dynamic microtubules. Operates redundantly with cls-2 and cls-3 in regulating microtubule processes which position the spindle during asymmetric cell division. In Caenorhabditis elegans, this protein is Protein CLASP-1 (cls-1).